The following is a 467-amino-acid chain: MNQQDIEQVVKAVLLKMQSSDTPSAAVHEMGVFASLDDAVAAAKVAQQGLKSVAMRQLAIAAIREAGEKHARDLAELAVSETGMGRVEDKFAKNVAQARGTPGVECLSPQVLTGDNGLTLIENAPWGVVASVTPSTNPAATVINNAISLIAAGNSVIFAPHPAAKKVSQRAITLLNQAIVAAGGPENLLVTVANPDIETAQRLFKFPGIGLLVVTGGEAVVEAARKHTNKRLIAAGAGNPPVVVDETADLARAAQSIVKGASFDNNIICADEKVLIVVDSVADELMRLMEGQHAVKLTAEQAQQLQPVLLKNIDERGKGTVSRDWVGRDAGKIAAAIGLKVPQETRLLFVETTAEHPFAVTELMMPVLPVVRVANVADAIALAVKLEGGCHHTAAMHSRNIENMNQMANAIDTSIFVKNGPCIAGLGLGGEGWTTMTITTPTGEGVTSARTFVRLRRCVLVDAFRIV.

Belongs to the EutE/PduP family. As to quaternary structure, interacts with EutS, which targets it to the interior of the BMC. Requires Has a very strong preference for NAD(+) over NADP(+). as cofactor.

Its subcellular location is the bacterial microcompartment. The enzyme catalyses acetaldehyde + NAD(+) + CoA = acetyl-CoA + NADH + H(+). It participates in amine and polyamine degradation; ethanolamine degradation. Its function is as follows. Acts as the second step in ethanolamine degradation by converting acetaldehyde into acetyl-CoA. May play a role in bacterial microcompartment (BMC) assembly or maintenance. Directly targeted to the BMC. Its heterologous expression in S.cerevisiae increases the level of acetylating acetaldehyde dehydrogenase activity. The polypeptide is Acetaldehyde dehydrogenase (acetylating) EutE (eutE) (Escherichia coli (strain K12)).